The sequence spans 343 residues: GTPase Obg (343 aa).

An Obg domain is found at 1–159 (MKFLDEAKVY…HWLWLRLKLI (159 aa)). The OBG-type G domain maps to 160–327 (ADAGLVGLPN…ALRALLAAMD (168 aa)). Residues 166–173 (GLPNAGKS), 191–195 (FTTLH), 212–215 (DIPG), 279–282 (SKAD), and 308–310 (SAA) contribute to the GTP site. Residues S173 and T193 each coordinate Mg(2+).

This sequence belongs to the TRAFAC class OBG-HflX-like GTPase superfamily. OBG GTPase family. In terms of assembly, monomer. Requires Mg(2+) as cofactor.

It localises to the cytoplasm. An essential GTPase which binds GTP, GDP and possibly (p)ppGpp with moderate affinity, with high nucleotide exchange rates and a fairly low GTP hydrolysis rate. Plays a role in control of the cell cycle, stress response, ribosome biogenesis and in those bacteria that undergo differentiation, in morphogenesis control. The sequence is that of GTPase Obg from Methylobacterium sp. (strain 4-46).